We begin with the raw amino-acid sequence, 1519 residues long: Rho guanine nucleotide exchange factor 40 (1519 aa).

Disordered stretches follow at residues 194–237 (VGHQ…PVEG) and 253–503 (RGSP…LETV). Residues 200 to 218 (TLPPELPSGPPGLPSPPLP) are compositionally biased toward pro residues. A Phosphoserine modification is found at serine 262. Positions 280–290 (KGRHRRHRAWM) are enriched in basic residues. Positions 314-341 (ASPESPPGAEAVPEAAVLEVSEPPAEAV) are enriched in low complexity. A compositionally biased stretch (gly residues) spans 355–367 (LRGGGGGGQGAEG). At threonine 371 the chain carries Phosphothreonine. Over residues 374 to 386 (RTGKGNRRKKRAA) the composition is skewed to basic residues. At serine 419 the chain carries Phosphoserine. Residues 421–457 (SEHKLPECHLVKEEYEGSGKPESEPKELKTAGEKEPQ) are compositionally biased toward basic and acidic residues. Residues 828–871 (SAEVQERLAQAREALALEENATSQKVLDIFEQRLEQVESGLHRA) are a coiled coil. Phosphoserine is present on residues serine 931 and serine 961. The stretch at 934-961 (ALREWGRCQARCQELERRIQQHVGEEAS) forms a coiled coil. The disordered stretch occupies residues 955–1031 (HVGEEASPRG…ELAPEAEGRP (77 aa)). A compositionally biased stretch (low complexity) spans 980-996 (WGPRSPSPSLSSLLLPS). Position 1082 is a phosphoserine (serine 1082). The DH domain maps to 1085-1253 (AQQRLVSELI…REQEARGRDL (169 aa)). In terms of domain architecture, PH spans 1265–1372 (DLKEQGQLLH…WTSSIAQLLW (108 aa)). Phosphoserine is present on residues serine 1433, serine 1438, and serine 1474. A disordered region spans residues 1466-1519 (TLDSSGDVSPGPRNSPSLQPPHPGSSTPTLASRGILGLSRQSHARALSDPTTPL). Residues 1467–1482 (LDSSGDVSPGPRNSPS) are compositionally biased toward polar residues. Threonine 1492 carries the post-translational modification Phosphothreonine.

In terms of tissue distribution, expressed at higher level in the central nervous system and skeletal muscle and greater abundance in fetal than adult brain (at protein level).

The protein resides in the cytoplasm. May act as a guanine nucleotide exchange factor (GEF). The sequence is that of Rho guanine nucleotide exchange factor 40 (ARHGEF40) from Homo sapiens (Human).